A 473-amino-acid chain; its full sequence is H(+)/Cl(-) exchange transporter ClcA (473 aa).

Over methionine 1–proline 32 the chain is Cytoplasmic. A helical membrane pass occupies residues leucine 33–valine 69. Residues histidine 70–proline 76 lie on the Periplasmic side of the membrane. A helical membrane pass occupies residues leucine 77–tyrosine 100. The Selectivity filter part_1 signature appears at glycine 106–proline 110. Serine 107 lines the chloride pocket. Positions isoleucine 109–leucine 116 form an intramembrane region, helical. Over glutamate 117–arginine 123 the chain is Cytoplasmic. The next 2 membrane-spanning stretches (helical) occupy residues tryptophan 124–glycine 141 and glutamate 148–phenylalanine 166. Positions glycine 146–proline 150 match the Selectivity filter part_2 motif. Topologically, residues arginine 167 to threonine 176 are cytoplasmic. 2 intramembrane regions (helical) span residues leucine 177–alanine 189 and proline 193–isoleucine 201. The Cytoplasmic segment spans residues glutamate 202 to serine 214. A helical transmembrane segment spans residues isoleucine 215 to phenylalanine 232. Residues asparagine 233 to leucine 252 lie on the Periplasmic side of the membrane. Residues tryptophan 253–histidine 281 form a helical membrane-spanning segment. Residues arginine 282–asparagine 287 lie on the Cytoplasmic side of the membrane. Residues isoleucine 288–alanine 309 traverse the membrane as a helical segment. Residues proline 310–serine 329 lie on the Periplasmic side of the membrane. 2 helical membrane-spanning segments follow: residues methionine 330–serine 349 and glycine 355–valine 376. The Selectivity filter part_3 signature appears at glycine 355–proline 359. Chloride contacts are provided by isoleucine 356 and phenylalanine 357. The Periplasmic segment spans residues glutamate 377 to alanine 386. The segment at residues glycine 387–serine 401 is an intramembrane region (helical). Positions isoleucine 402 to alanine 404 form an intramembrane region, note=Loop between two helices. The helical intramembrane region spans proline 405–threonine 416. The note=Loop between two helices intramembrane region spans aspartate 417–leucine 421. A helical transmembrane segment spans residues isoleucine 422–phenylalanine 438. The Cytoplasmic portion of the chain corresponds to threonine 439–threonine 473. Residue tyrosine 445 participates in chloride binding.

Belongs to the chloride channel (TC 2.A.49) family. ClcA subfamily. Homodimer.

It localises to the cell inner membrane. It carries out the reaction 2 chloride(in) + H(+)(out) = 2 chloride(out) + H(+)(in). In terms of biological role, proton-coupled chloride transporter. Functions as antiport system and exchanges two chloride ions for 1 proton. Probably acts as an electrical shunt for an outwardly-directed proton pump that is linked to amino acid decarboxylation, as part of the extreme acid resistance (XAR) response. This chain is H(+)/Cl(-) exchange transporter ClcA, found in Escherichia coli O45:K1 (strain S88 / ExPEC).